A 470-amino-acid polypeptide reads, in one-letter code: ATP synthase subunit beta (470 aa).

Residue 155–162 (GGAGVGKT) participates in ATP binding.

Belongs to the ATPase alpha/beta chains family. In terms of assembly, F-type ATPases have 2 components, CF(1) - the catalytic core - and CF(0) - the membrane proton channel. CF(1) has five subunits: alpha(3), beta(3), gamma(1), delta(1), epsilon(1). CF(0) has three main subunits: a(1), b(2) and c(9-12). The alpha and beta chains form an alternating ring which encloses part of the gamma chain. CF(1) is attached to CF(0) by a central stalk formed by the gamma and epsilon chains, while a peripheral stalk is formed by the delta and b chains.

It localises to the cell membrane. The catalysed reaction is ATP + H2O + 4 H(+)(in) = ADP + phosphate + 5 H(+)(out). In terms of biological role, produces ATP from ADP in the presence of a proton gradient across the membrane. The catalytic sites are hosted primarily by the beta subunits. The chain is ATP synthase subunit beta from Pectinatus frisingensis.